A 496-amino-acid chain; its full sequence is Thiamine transporter 2 (496 aa).

The Cytoplasmic segment spans residues 1 to 7; the sequence is MDCYRTS. The chain crosses the membrane as a helical span at residues 8-28; that stretch reads PSNSWIYTTVILCIFGFFSMM. At 29–53 the chain is on the extracellular side; sequence RPSEPFLIPYLSGPDKNLTSEEMTN. Residue asparagine 45 is glycosylated (N-linked (GlcNAc...) asparagine). Residues 54–74 traverse the membrane as a helical segment; the sequence is EIFPVWTYSYLVLLLPVLVLT. Over 75–81 the chain is Cytoplasmic; sequence DYVRYKP. The helical transmembrane segment at 82 to 102 threads the bilayer; that stretch reads VIILQGISFIITWLLLLFGQG. Residues 103 to 110 lie on the Extracellular side of the membrane; the sequence is VKTMQVVE. The helical transmembrane segment at 111–131 threads the bilayer; sequence FFYGMVTATEVAYYAYIYSVV. The Cytoplasmic segment spans residues 132 to 144; sequence SPEHYQRVSGYCR. A helical transmembrane segment spans residues 145-165; the sequence is SVTLVAYTAGSVLAQLLVSLA. An N-linked (GlcNAc...) asparagine glycan is attached at asparagine 166. Residues 166 to 169 are Extracellular-facing; it reads NLSY. Residues 170–190 form a helical membrane-spanning segment; sequence FYLNVISLASVSVAFLFSLFL. Residues 191 to 282 lie on the Cytoplasmic side of the membrane; that stretch reads PMPKKSMFFH…YSSKRLFYWS (92 aa). Positions 210-248 are disordered; that stretch reads SSSVNPVLEETHEGEAPDCEKQKPTSEIPSTSGKLHKGQ. A compositionally biased stretch (basic and acidic residues) spans 218–233; that stretch reads EETHEGEAPDCEKQKP. The segment covering 234 to 248 has biased composition (polar residues); sequence TSEIPSTSGKLHKGQ. A helical membrane pass occupies residues 283 to 303; the sequence is LWWAFATAGFNQILNYVQILW. The Extracellular portion of the chain corresponds to 304–316; the sequence is DYKSPSQDSSIYN. A helical membrane pass occupies residues 317 to 337; the sequence is GAVEATATFGGAVAAFAVGYV. Residues 338-342 lie on the Cytoplasmic side of the membrane; sequence KVNWD. Residues 343-363 form a helical membrane-spanning segment; sequence LLGELALAVFSVVNAGSLFLM. The Extracellular portion of the chain corresponds to 364–375; it reads HYTANIWACYAG. The chain crosses the membrane as a helical span at residues 376 to 396; the sequence is YLIFKSSYMLLITIAVFQIAV. The Cytoplasmic portion of the chain corresponds to 397-405; sequence NLSVERYAL. Residues 406–426 traverse the membrane as a helical segment; that stretch reads VFGINTFIALVIQTIITVIVV. At 427-434 the chain is on the extracellular side; that stretch reads DQRGLNLP. The chain crosses the membrane as a helical span at residues 435–455; it reads ISIQFLVYGSYFAVIAGIFLM. Over 456–496 the chain is Cytoplasmic; it reads RSMYIIYSTKSQKDVQSPAPSENPDMSHPEEESNAIMSTKL. The disordered stretch occupies residues 469 to 496; the sequence is DVQSPAPSENPDMSHPEEESNAIMSTKL.

This sequence belongs to the reduced folate carrier (RFC) transporter (TC 2.A.48) family.

The protein localises to the membrane. The enzyme catalyses thiamine(out) + H(+)(in) = thiamine(in) + H(+)(out). The catalysed reaction is pyridoxine(out) + n H(+)(out) = pyridoxine(in) + n H(+)(in). Mediates high affinity thiamine uptake, probably via a proton anti-port mechanism. Has no folate transport activity. Mediates H(+)-dependent pyridoxine transport. The sequence is that of Thiamine transporter 2 (SLC19A3) from Macaca fascicularis (Crab-eating macaque).